The following is a 363-amino-acid chain: MSLFKFAAFVLGTAGSVAGHGYVTKIDVDGTTYGGYLVDTYSYEPDPPKLIAWSTTATDTGYVSPSAYGTSDIVCHRGAEPGALSAETLPGGSVTLYWNTWPTDHHGPVITYLANCNGDCASVDKSTLKFFKIDAGGLVDNSAVPGTWATDELIAADFSRTVTIPSDIASGNYVLRHEIIALHSAGNKDGAQNYPQCINLKITGSGTAAPTGTLGTELYKNTDAGIGVNIWNALSSYAIPGPALYTSGSDSNTATSGASPPSTNFSPTTTAAAATTTLSTVVTSAQSTSATVVAEQTSVSYSQTPWPSSTATEATSASSSAGGSNNGHTGTHDEAGHCPAHTGKKRSRLNRRRMASCSSRTQS.

The N-terminal stretch at 1 to 19 is a signal peptide; the sequence is MSLFKFAAFVLGTAGSVAG. Cu(2+) contacts are provided by His-20 and His-105. Intrachain disulfides connect Cys-75/Cys-197 and Cys-116/Cys-120. Residues His-183 and Gln-192 each contribute to the O2 site. Tyr-194 contributes to the Cu(2+) binding site. Residues 248-257 show a composition bias toward polar residues; it reads GSDSNTATSG. Disordered stretches follow at residues 248–270 and 298–363; these read GSDS…PTTT and SVSY…RTQS. Residues 258 to 270 show a composition bias toward low complexity; sequence ASPPSTNFSPTTT. Residues 298-307 show a composition bias toward polar residues; that stretch reads SVSYSQTPWP. Low complexity predominate over residues 308 to 329; sequence SSTATEATSASSSAGGSNNGHT. Positions 342–354 are enriched in basic residues; it reads TGKKRSRLNRRRM.

Belongs to the polysaccharide monooxygenase AA9 family. It depends on Cu(2+) as a cofactor.

The protein localises to the secreted. It carries out the reaction [(1-&gt;4)-beta-D-glucosyl]n+m + reduced acceptor + O2 = 4-dehydro-beta-D-glucosyl-[(1-&gt;4)-beta-D-glucosyl]n-1 + [(1-&gt;4)-beta-D-glucosyl]m + acceptor + H2O.. In terms of biological role, lytic polysaccharide monooxygenase (LPMO) that depolymerizes crystalline and amorphous polysaccharides via the oxidation of scissile alpha- or beta-(1-4)-glycosidic bonds, yielding C1 or C4 oxidation products. Catalysis by LPMOs requires the reduction of the active-site copper from Cu(II) to Cu(I) by a reducing agent and H(2)O(2) or O(2) as a cosubstrate. This Emericella nidulans (strain FGSC A4 / ATCC 38163 / CBS 112.46 / NRRL 194 / M139) (Aspergillus nidulans) protein is AA9 family lytic polysaccharide monooxygenase I.